Here is a 168-residue protein sequence, read N- to C-terminus: UPF0478 protein SH1183 (168 aa).

A helical transmembrane segment spans residues 7 to 27; that stretch reads IAGIIAAIAFLVLCIGIVVVL. A disordered region spans residues 144-168; it reads YRNTSVGNDANHSNENYTTNVEKNF.

The protein belongs to the UPF0478 family.

The protein localises to the cell membrane. This chain is UPF0478 protein SH1183, found in Staphylococcus haemolyticus (strain JCSC1435).